The following is a 421-amino-acid chain: Forkhead box protein fkh-4 (421 aa).

The fork-head DNA-binding region spans 118 to 218; the sequence is RPPISYVALC…SDADFDFFRK (101 aa).

The protein localises to the nucleus. Functionally, transcription factor. Regulates expression of a class of small RNAs, known as 21U-RNAs, perhaps acting redundantly with fkh-3 and fkh-5. This Caenorhabditis elegans protein is Forkhead box protein fkh-4.